Consider the following 318-residue polypeptide: Acetyl-coenzyme A carboxylase carboxyl transferase subunit alpha (318 aa).

The 254-residue stretch at 39 to 292 (LTDKSEKQLR…GDSIAAELPD (254 aa)) folds into the CoA carboxyltransferase C-terminal domain.

This sequence belongs to the AccA family. As to quaternary structure, acetyl-CoA carboxylase is a heterohexamer composed of biotin carboxyl carrier protein (AccB), biotin carboxylase (AccC) and two subunits each of ACCase subunit alpha (AccA) and ACCase subunit beta (AccD).

The protein resides in the cytoplasm. The enzyme catalyses N(6)-carboxybiotinyl-L-lysyl-[protein] + acetyl-CoA = N(6)-biotinyl-L-lysyl-[protein] + malonyl-CoA. It participates in lipid metabolism; malonyl-CoA biosynthesis; malonyl-CoA from acetyl-CoA: step 1/1. Its function is as follows. Component of the acetyl coenzyme A carboxylase (ACC) complex. First, biotin carboxylase catalyzes the carboxylation of biotin on its carrier protein (BCCP) and then the CO(2) group is transferred by the carboxyltransferase to acetyl-CoA to form malonyl-CoA. The polypeptide is Acetyl-coenzyme A carboxylase carboxyl transferase subunit alpha (Gluconacetobacter diazotrophicus (strain ATCC 49037 / DSM 5601 / CCUG 37298 / CIP 103539 / LMG 7603 / PAl5)).